A 338-amino-acid chain; its full sequence is Probable G-protein coupled receptor 160 (338 aa).

Topologically, residues 1–23 (MTALSSENCSFQYQLRQTNQPLD) are extracellular. Asn-8 is a glycosylation site (N-linked (GlcNAc...) asparagine). Residues 24-44 (VNYLLFLIILGKILLNILTLG) traverse the membrane as a helical segment. The Cytoplasmic segment spans residues 45–58 (MRRKNTCQNFMEYF). A helical transmembrane segment spans residues 59–79 (CISLAFVDLLLLVNISIILYF). Residues 80–93 (RDFVLLSIRFTKYH) lie on the Extracellular side of the membrane. The helical transmembrane segment at 94 to 114 (ICLFTQIISFTYGFLHYPVFL) threads the bilayer. Residues 115–136 (TACIDYCLNFSKTTKLSFKCQK) lie on the Cytoplasmic side of the membrane. A helical membrane pass occupies residues 137-157 (LFYFFTVILIWISVLAYVLGD). The Extracellular portion of the chain corresponds to 158–177 (PAIYQSLKAQNAYSRHCPFY). A helical transmembrane segment spans residues 178 to 198 (VSIQSYWLSFFMVMILFVAFI). Residues 199–244 (TCWEEVTTLVQAIRITSYMNETILYFPFSSHSSYTVRSKKIFLSKL) lie on the Cytoplasmic side of the membrane. Residues 245 to 265 (IVCFLSTWLPFVLLQVIIVLL) traverse the membrane as a helical segment. Topologically, residues 266–268 (KVQ) are extracellular. The chain crosses the membrane as a helical span at residues 269–289 (IPAYIEMNIPWLYFVNSFLIA). The Cytoplasmic segment spans residues 290–338 (TVYWFNCHKLNLKDIGLPLDPFVNWKCCFIPLTIPNLEQIEKPISIMIC).

It belongs to the G-protein coupled receptor 1 family.

The protein resides in the cell membrane. In terms of biological role, orphan receptor. The protein is Probable G-protein coupled receptor 160 (GPR160) of Homo sapiens (Human).